The sequence spans 740 residues: DNA polymerase iota (740 aa).

Residues 1–21 (MEKLGVEPEEEGGGDDDEEDA) form a disordered region. Over residues 7-21 (EPEEEGGGDDDEEDA) the composition is skewed to acidic residues. Residues 55-268 (IVHVDLDCFY…NHIKEIPGIG (214 aa)) enclose the UmuC domain. 2 residues coordinate Mg(2+): Asp59 and Leu60. Mn(2+) is bound by residues Asp59 and Leu60. A 2'-deoxyribonucleoside 5'-triphosphate-binding residues include Tyr64 and Arg96. A Mg(2+)-binding site is contributed by Asp151. Asp151 provides a ligand contact to Mn(2+). Glu152 functions as the Proton acceptor in the catalytic mechanism. DNA-binding regions lie at residues 249–314 (ESCQ…FGED) and 325–439 (QSFS…CNLK). A Ubiquitin-binding 1 (UBM1) motif is present at residues 527 to 544 (VDQEVFKQLPVDIQEEIL). Disordered stretches follow at residues 581-615 (PINP…SSYM) and 671-704 (NHTT…KITF). Over residues 605 to 615 (SGFNSSSSSYM) the composition is skewed to low complexity. Over residues 672 to 702 (HTTDSHKQTVATDSHEGLTENREPDSVDEKI) the composition is skewed to basic and acidic residues. The Ubiquitin-binding 2 (UBM2) motif lies at 708 to 725 (IDPQVFYELPEAVQKELL).

The protein belongs to the DNA polymerase type-Y family. In terms of assembly, interacts with POLH. Interacts with REV1. Interacts with ubiquitin. The cofactor is Mg(2+). It depends on Mn(2+) as a cofactor. In terms of processing, monoubiquitinated. Protein monoubiquitination prevents POLI binding to ubiquitin via the ubiquitin-binding motif 1 and ubiquitin-binding motif 2. In terms of tissue distribution, ubiquitous. Highly expressed in testis.

The protein localises to the nucleus. The enzyme catalyses DNA(n) + a 2'-deoxyribonucleoside 5'-triphosphate = DNA(n+1) + diphosphate. In terms of biological role, error-prone DNA polymerase specifically involved in DNA repair. Plays an important role in translesion synthesis, where the normal high-fidelity DNA polymerases cannot proceed and DNA synthesis stalls. Favors Hoogsteen base-pairing in the active site. Inserts the correct base with high-fidelity opposite an adenosine template. Exhibits low fidelity and efficiency opposite a thymidine template, where it will preferentially insert guanosine. May play a role in hypermutation of immunoglobulin genes. Forms a Schiff base with 5'-deoxyribose phosphate at abasic sites, but may not have lyase activity. This Homo sapiens (Human) protein is DNA polymerase iota (POLI).